The following is a 491-amino-acid chain: Probable glycine dehydrogenase (decarboxylating) subunit 2 (491 aa).

Lys-264 carries the N6-(pyridoxal phosphate)lysine modification.

The protein belongs to the GcvP family. C-terminal subunit subfamily. As to quaternary structure, the glycine cleavage system is composed of four proteins: P, T, L and H. In this organism, the P 'protein' is a heterodimer of two subunits. It depends on pyridoxal 5'-phosphate as a cofactor.

The catalysed reaction is N(6)-[(R)-lipoyl]-L-lysyl-[glycine-cleavage complex H protein] + glycine + H(+) = N(6)-[(R)-S(8)-aminomethyldihydrolipoyl]-L-lysyl-[glycine-cleavage complex H protein] + CO2. In terms of biological role, the glycine cleavage system catalyzes the degradation of glycine. The P protein binds the alpha-amino group of glycine through its pyridoxal phosphate cofactor; CO(2) is released and the remaining methylamine moiety is then transferred to the lipoamide cofactor of the H protein. This chain is Probable glycine dehydrogenase (decarboxylating) subunit 2, found in Coxiella burnetii (strain CbuG_Q212) (Coxiella burnetii (strain Q212)).